We begin with the raw amino-acid sequence, 98 residues long: uncharacterized protein (98 aa).

The protein belongs to the YciI family. In terms of assembly, homodimer.

This is an uncharacterized protein from Haemophilus influenzae (strain ATCC 51907 / DSM 11121 / KW20 / Rd).